Consider the following 194-residue polypeptide: Peptidyl-tRNA hydrolase (194 aa).

TRNA is bound at residue tyrosine 16. Histidine 21 functions as the Proton acceptor in the catalytic mechanism. TRNA-binding residues include phenylalanine 67, asparagine 69, and asparagine 115.

It belongs to the PTH family. Monomer.

It localises to the cytoplasm. The catalysed reaction is an N-acyl-L-alpha-aminoacyl-tRNA + H2O = an N-acyl-L-amino acid + a tRNA + H(+). Hydrolyzes ribosome-free peptidyl-tRNAs (with 1 or more amino acids incorporated), which drop off the ribosome during protein synthesis, or as a result of ribosome stalling. Functionally, catalyzes the release of premature peptidyl moieties from peptidyl-tRNA molecules trapped in stalled 50S ribosomal subunits, and thus maintains levels of free tRNAs and 50S ribosomes. The protein is Peptidyl-tRNA hydrolase of Salmonella dublin (strain CT_02021853).